A 450-amino-acid chain; its full sequence is Gluconate permease (450 aa).

Transmembrane regions (helical) follow at residues 6–26 (HDAYLLLDALVTIIGLIVLIT), 30–50 (VHPFIALIIAAGFLGLTSGMP), 60–80 (DGFGGVLGFVGVILALGTMLG), 116–136 (VGIPLFFEIGFILLIPLVFIV), 142–162 (VSLIKIGIPLLAGLSAVHGLV), 183–203 (ILYGLIVALPTAAIAGPLFGA), 233–253 (FGVTLATVLLPVFLMLLKTFA), 269–289 (MIGHPISALLLALLVALYTFG), 312–332 (AIVMIIGAGGGFKQMLVASGV), 338–358 (HLAVNAQISPILLAWLVAAVI), 366–386 (TVATITGAGIVVPVIDLIPGV), and 430–450 (AMETILSVVGLVFILLLSLVL).

The protein belongs to the GntP permease family.

Its subcellular location is the cell inner membrane. It participates in carbohydrate acid metabolism; D-gluconate degradation. The sequence is that of Gluconate permease (gnuT) from Pseudomonas aeruginosa (strain ATCC 15692 / DSM 22644 / CIP 104116 / JCM 14847 / LMG 12228 / 1C / PRS 101 / PAO1).